The chain runs to 118 residues: MIIGHGIDLQEISAVEKAYKRQPRFAQKVLTQKEFDIFEAYKGKRQISYLAGRWSAKEAFAKAMGTGIGNLSFQDIEVLSDEKGKPFINRSPFTGKAWISISHSGDFVQSSVILEEEK.

Asp-8 and Glu-58 together coordinate Mg(2+).

It belongs to the P-Pant transferase superfamily. AcpS family. Mg(2+) serves as cofactor.

The protein localises to the cytoplasm. The enzyme catalyses apo-[ACP] + CoA = holo-[ACP] + adenosine 3',5'-bisphosphate + H(+). Its function is as follows. Transfers the 4'-phosphopantetheine moiety from coenzyme A to a Ser of acyl-carrier-protein. In Streptococcus uberis (strain ATCC BAA-854 / 0140J), this protein is Holo-[acyl-carrier-protein] synthase.